The following is an 87-amino-acid chain: Putative regulatory protein syc0519_c (87 aa).

The protein belongs to the RemA family.

The polypeptide is Putative regulatory protein syc0519_c (Synechococcus sp. (strain ATCC 27144 / PCC 6301 / SAUG 1402/1) (Anacystis nidulans)).